Consider the following 420-residue polypeptide: Glucose-1-phosphate adenylyltransferase (420 aa).

Alpha-D-glucose 1-phosphate is bound by residues Tyr107, Gly172, 187–188 (EK), and Ser205.

The protein belongs to the bacterial/plant glucose-1-phosphate adenylyltransferase family. As to quaternary structure, homotetramer.

It carries out the reaction alpha-D-glucose 1-phosphate + ATP + H(+) = ADP-alpha-D-glucose + diphosphate. It participates in glycan biosynthesis; glycogen biosynthesis. Involved in the biosynthesis of ADP-glucose, a building block required for the elongation reactions to produce glycogen. Catalyzes the reaction between ATP and alpha-D-glucose 1-phosphate (G1P) to produce pyrophosphate and ADP-Glc. The sequence is that of Glucose-1-phosphate adenylyltransferase from Rhizobium radiobacter (Agrobacterium tumefaciens).